Here is a 238-residue protein sequence, read N- to C-terminus: 1-(5-phosphoribosyl)-5-[(5-phosphoribosylamino)methylideneamino] imidazole-4-carboxamide isomerase (238 aa).

Residue Asp-8 is the Proton acceptor of the active site. Asp-130 (proton donor) is an active-site residue.

Belongs to the HisA/HisF family.

It localises to the cytoplasm. It carries out the reaction 1-(5-phospho-beta-D-ribosyl)-5-[(5-phospho-beta-D-ribosylamino)methylideneamino]imidazole-4-carboxamide = 5-[(5-phospho-1-deoxy-D-ribulos-1-ylimino)methylamino]-1-(5-phospho-beta-D-ribosyl)imidazole-4-carboxamide. It functions in the pathway amino-acid biosynthesis; L-histidine biosynthesis; L-histidine from 5-phospho-alpha-D-ribose 1-diphosphate: step 4/9. This chain is 1-(5-phosphoribosyl)-5-[(5-phosphoribosylamino)methylideneamino] imidazole-4-carboxamide isomerase, found in Methanococcus vannielii (strain ATCC 35089 / DSM 1224 / JCM 13029 / OCM 148 / SB).